We begin with the raw amino-acid sequence, 162 residues long: Crossover junction endodeoxyribonuclease RuvC (162 aa).

Catalysis depends on residues Asp8, Glu69, and His141. Residues Asp8, Glu69, and His141 each contribute to the Mg(2+) site.

It belongs to the RuvC family. As to quaternary structure, homodimer which binds Holliday junction (HJ) DNA. The HJ becomes 2-fold symmetrical on binding to RuvC with unstacked arms; it has a different conformation from HJ DNA in complex with RuvA. In the full resolvosome a probable DNA-RuvA(4)-RuvB(12)-RuvC(2) complex forms which resolves the HJ. The cofactor is Mg(2+).

The protein localises to the cytoplasm. The catalysed reaction is Endonucleolytic cleavage at a junction such as a reciprocal single-stranded crossover between two homologous DNA duplexes (Holliday junction).. The RuvA-RuvB-RuvC complex processes Holliday junction (HJ) DNA during genetic recombination and DNA repair. Endonuclease that resolves HJ intermediates. Cleaves cruciform DNA by making single-stranded nicks across the HJ at symmetrical positions within the homologous arms, yielding a 5'-phosphate and a 3'-hydroxyl group; requires a central core of homology in the junction. The consensus cleavage sequence is 5'-(A/T)TT(C/G)-3'. Cleavage occurs on the 3'-side of the TT dinucleotide at the point of strand exchange. HJ branch migration catalyzed by RuvA-RuvB allows RuvC to scan DNA until it finds its consensus sequence, where it cleaves and resolves the cruciform DNA. This Wolbachia pipientis wMel protein is Crossover junction endodeoxyribonuclease RuvC.